Reading from the N-terminus, the 185-residue chain is Ribosome-recycling factor (185 aa).

It belongs to the RRF family.

The protein resides in the cytoplasm. In terms of biological role, responsible for the release of ribosomes from messenger RNA at the termination of protein biosynthesis. May increase the efficiency of translation by recycling ribosomes from one round of translation to another. This chain is Ribosome-recycling factor, found in Lactococcus lactis subsp. lactis (strain IL1403) (Streptococcus lactis).